Reading from the N-terminus, the 231-residue chain is Eukaryotic translation initiation factor 4E-1 (231 aa).

EIF4G-binding stretches follow at residues 56–59 and 66–102; these read HPLE and FDNS…NNIH. Residues 74-79, Lys106, and 124-125 contribute to the mRNA site; these read RQTAWG and WE. An intrachain disulfide couples Cys129 to Cys167. The interval 150–159 is EIF4G-binding; the sequence is YTLLAMIGHQ. Residues 174 to 179 and 219 to 223 each bind mRNA; these read RAKGEK and KRLDR.

This sequence belongs to the eukaryotic initiation factor 4E family. EIF4F is a multi-subunit complex, the composition of which varies with external and internal environmental conditions. It is composed of at least EIF4A, EIF4E and EIF4G. EIF4E is also known to interact with other partners. In higher plants two isoforms of EIF4F have been identified, named isoform EIF4F and isoform EIF(iso)4F. Isoform EIF4F has subunits p220 and p26, whereas isoform EIF(iso)4F has subunits p82 and p28. In terms of assembly, (Microbial infection) Interacts with potyvirus viral genome-linked protein (VPg); this interaction is possible in susceptible hosts but impaired in resistant plants. In terms of processing, according to the redox status, the Cys-129-Cys-167 disulfide bridge may have a role in regulating protein function by affecting its ability to bind capped mRNA.

Its subcellular location is the nucleus. The protein localises to the cytoplasm. Component of the protein complex eIF4F, which is involved in the recognition of the mRNA cap, ATP-dependent unwinding of 5'-terminal secondary structure and recruitment of mRNA to the ribosome. Recognizes and binds the 7-methylguanosine-containing mRNA cap during an early step in the initiation of protein synthesis and facilitates ribosome binding by inducing the unwinding of the mRNAs secondary structures. Key component of recessive resistance to potyviruses. Its function is as follows. (Microbial infection) Susceptibility host factor required for viral infection (e.g. pepper mottle virus (PepMoV), potato virus Y (PVY) and tobacco etch virus (TEV)) by recruiting viral RNAs to the host ribosomal complex via an interaction with viral genome-linked protein (VPg). The chain is Eukaryotic translation initiation factor 4E-1 from Solanum habrochaites (Wild tomato).